A 348-amino-acid polypeptide reads, in one-letter code: D-erythrose-4-phosphate dehydrogenase (348 aa).

NAD(+) is bound by residues 12–13 (RI) and R81. Residues 154–156 (SCT), R200, 213–214 (TK), and R236 contribute to the substrate site. Residue C155 is the Nucleophile of the active site. Residue N318 participates in NAD(+) binding.

It belongs to the glyceraldehyde-3-phosphate dehydrogenase family. Epd subfamily. As to quaternary structure, homotetramer.

Its subcellular location is the cytoplasm. The enzyme catalyses D-erythrose 4-phosphate + NAD(+) + H2O = 4-phospho-D-erythronate + NADH + 2 H(+). The protein operates within cofactor biosynthesis; pyridoxine 5'-phosphate biosynthesis; pyridoxine 5'-phosphate from D-erythrose 4-phosphate: step 1/5. Catalyzes the NAD-dependent conversion of D-erythrose 4-phosphate to 4-phosphoerythronate. This is D-erythrose-4-phosphate dehydrogenase from Salmonella dublin (strain CT_02021853).